We begin with the raw amino-acid sequence, 128 residues long: LIM domain-containing protein 2 (128 aa).

Methionine 1 carries the post-translational modification N-acetylmethionine. The segment at 1–25 (MFQAAGAAQATPSHEAKGGGSSSTV) is disordered. The 61-residue stretch at 39-99 (ETCAACQKTV…KPHFQQLFKS (61 aa)) folds into the LIM zinc-binding domain. Zn(2+) is bound by residues cysteine 41, cysteine 44, histidine 62, cysteine 65, cysteine 68, cysteine 71, cysteine 89, and histidine 92.

Interacts with ILK.

The protein resides in the cytoplasm. It localises to the nucleus. Functionally, acts as an activator of the protein-kinase ILK, thereby regulating cell motility. The polypeptide is LIM domain-containing protein 2 (LIMD2) (Bos taurus (Bovine)).